A 387-amino-acid polypeptide reads, in one-letter code: Succinate--CoA ligase [ADP-forming] subunit beta (387 aa).

The 236-residue stretch at 9–244 (KQLFASYGLP…VSQEDDRENR (236 aa)) folds into the ATP-grasp domain. ATP is bound by residues K46, 53 to 55 (GRG), E99, C102, and E107. Mg(2+) contacts are provided by N199 and D213. Substrate contacts are provided by residues N264 and 321-323 (GIV).

The protein belongs to the succinate/malate CoA ligase beta subunit family. As to quaternary structure, heterotetramer of two alpha and two beta subunits. It depends on Mg(2+) as a cofactor.

The enzyme catalyses succinate + ATP + CoA = succinyl-CoA + ADP + phosphate. The catalysed reaction is GTP + succinate + CoA = succinyl-CoA + GDP + phosphate. It participates in carbohydrate metabolism; tricarboxylic acid cycle; succinate from succinyl-CoA (ligase route): step 1/1. Functionally, succinyl-CoA synthetase functions in the citric acid cycle (TCA), coupling the hydrolysis of succinyl-CoA to the synthesis of either ATP or GTP and thus represents the only step of substrate-level phosphorylation in the TCA. The beta subunit provides nucleotide specificity of the enzyme and binds the substrate succinate, while the binding sites for coenzyme A and phosphate are found in the alpha subunit. The chain is Succinate--CoA ligase [ADP-forming] subunit beta from Legionella pneumophila (strain Paris).